Reading from the N-terminus, the 317-residue chain is Acetyl-coenzyme A carboxylase carboxyl transferase subunit alpha (317 aa).

In terms of domain architecture, CoA carboxyltransferase C-terminal spans 40 to 293 (LEGRVRDAMV…ETVIGDALKE (254 aa)).

The protein belongs to the AccA family. As to quaternary structure, acetyl-CoA carboxylase is a heterohexamer composed of biotin carboxyl carrier protein (AccB), biotin carboxylase (AccC) and two subunits each of ACCase subunit alpha (AccA) and ACCase subunit beta (AccD).

The protein resides in the cytoplasm. It catalyses the reaction N(6)-carboxybiotinyl-L-lysyl-[protein] + acetyl-CoA = N(6)-biotinyl-L-lysyl-[protein] + malonyl-CoA. Its pathway is lipid metabolism; malonyl-CoA biosynthesis; malonyl-CoA from acetyl-CoA: step 1/1. Component of the acetyl coenzyme A carboxylase (ACC) complex. First, biotin carboxylase catalyzes the carboxylation of biotin on its carrier protein (BCCP) and then the CO(2) group is transferred by the carboxyltransferase to acetyl-CoA to form malonyl-CoA. This is Acetyl-coenzyme A carboxylase carboxyl transferase subunit alpha from Rhizobium meliloti (strain 1021) (Ensifer meliloti).